We begin with the raw amino-acid sequence, 344 residues long: Uroporphyrinogen decarboxylase (344 aa).

Substrate-binding positions include 23–27, Asp73, Tyr149, Thr204, and His321; that span reads RQAGR.

The protein belongs to the uroporphyrinogen decarboxylase family. Homodimer.

The protein resides in the cytoplasm. The catalysed reaction is uroporphyrinogen III + 4 H(+) = coproporphyrinogen III + 4 CO2. It functions in the pathway porphyrin-containing compound metabolism; protoporphyrin-IX biosynthesis; coproporphyrinogen-III from 5-aminolevulinate: step 4/4. Functionally, catalyzes the decarboxylation of four acetate groups of uroporphyrinogen-III to yield coproporphyrinogen-III. The polypeptide is Uroporphyrinogen decarboxylase (Francisella tularensis subsp. tularensis (strain FSC 198)).